The chain runs to 291 residues: Hydroxysteroid 11-beta-dehydrogenase 1-like protein A (291 aa).

The first 18 residues, 1 to 18, serve as a signal peptide directing secretion; it reads MAGVKLLLLSLCVGYTAY. NADP(+)-binding positions include 40–66, 91–92, and 118–120; these read GSST…TARR, DM, and NHI. Substrate is bound at residue serine 170. Tyrosine 183 acts as the Proton acceptor in catalysis. Residues 183–187 and 216–222 each bind NADP(+); these read YCASK and GYIDTEN.

This sequence belongs to the short-chain dehydrogenases/reductases (SDR) family.

The protein resides in the secreted. It carries out the reaction cortisone + NADPH + H(+) = cortisol + NADP(+). Unidirectional NADP(+)-dependent cortisol dehydrogenase (in vitro). This Xenopus laevis (African clawed frog) protein is Hydroxysteroid 11-beta-dehydrogenase 1-like protein A (hsd11b1l-a).